Here is a 166-residue protein sequence, read N- to C-terminus: Putative 4-hydroxy-4-methyl-2-oxoglutarate aldolase 3 (166 aa).

An N-acetylalanine modification is found at Ala2. Residues Gly81–Leu84 and Arg103 each bind substrate. Asp104 serves as a coordination point for a divalent metal cation.

This sequence belongs to the class II aldolase/RraA-like family. Homotrimer. The cofactor is a divalent metal cation.

It carries out the reaction 4-hydroxy-4-methyl-2-oxoglutarate = 2 pyruvate. The catalysed reaction is oxaloacetate + H(+) = pyruvate + CO2. Catalyzes the aldol cleavage of 4-hydroxy-4-methyl-2-oxoglutarate (HMG) into 2 molecules of pyruvate. Also contains a secondary oxaloacetate (OAA) decarboxylase activity due to the common pyruvate enolate transition state formed following C-C bond cleavage in the retro-aldol and decarboxylation reactions. The chain is Putative 4-hydroxy-4-methyl-2-oxoglutarate aldolase 3 from Arabidopsis thaliana (Mouse-ear cress).